We begin with the raw amino-acid sequence, 461 residues long: Protein-serine O-palmitoleoyltransferase porcupine (461 aa).

Over 1 to 17 (MATFSRQEFFQQLLQGC) the chain is Cytoplasmic. A helical membrane pass occupies residues 18 to 38 (LLPTVQQGLDQIWLLLTICFA). Residues 39-66 (CRLLWRLGLPSYLKHASTVAGGFFSLYH) lie on the Extracellular side of the membrane. Residues 67–87 (FFQLHMVWVVLLSLLCYLVLF) form a helical membrane-spanning segment. The Cytoplasmic portion of the chain corresponds to 88 to 95 (LCRHSSHR). The helical transmembrane segment at 96-116 (GVFLSVTILIYLLMGEMHMVD) threads the bilayer. Residues 117–152 (TVTWHKMRGAQMIVAMKAVSLGFDLDRGEVGAVPSP) are Extracellular-facing. Residues 153–173 (VEFMGYLYFVGTIVFGPWISF) traverse the membrane as a helical segment. Residues 174-198 (HSYLQAVQGRPLSRRWLKKVARSLA) are Cytoplasmic-facing. Residues 199–219 (LALLCLVLSTCVGPYLFPYFI) form a helical membrane-spanning segment. Topologically, residues 220-252 (PLDGDRLLRNKKRKARGTMVRWLRAYESAVSFH) are extracellular. Residues 253–273 (FSNYFVGFLSEATATLAGAGF) traverse the membrane as a helical segment. Topologically, residues 274-337 (TEEKDHLEWD…SAVLVTYAAS (64 aa)) are cytoplasmic. Residues 338–358 (ALLHGFSFHLAAVLLSLAFIT) traverse the membrane as a helical segment. Residue His-341 is part of the active site. The Extracellular portion of the chain corresponds to 359–396 (YVEHVLRKRLAQILSACILSKRCLPDCSHRHRLGLGVR). A helical transmembrane segment spans residues 397–417 (ALNLLFGALAIFHLSYLGSLF). Residues 418 to 461 (DVDVDDTTEEQGYGMAYTVHKWSELSWASHWVTFGCWIFYRLIG) are Cytoplasmic-facing.

The protein belongs to the membrane-bound acyltransferase family. Porcupine subfamily. Interacts with WNT1, WNT3, WNT3A, WNT4, WNT5A, WNT5B, WNT6, WNT7A and WNT7B. Expressed in brain, heart, kidney, liver, lung, muscle, spleen and testis. Isoform 4 is strongly expressed in kidney, liver, lung, spleen and testis. Isoform 1 is strongly expressed in brain, heart and muscle and poorly in kidney, liver, lung, spleen and testis.

Its subcellular location is the endoplasmic reticulum membrane. It carries out the reaction [Wnt protein]-L-serine + (9Z)-hexadecenoyl-CoA = [Wnt protein]-O-(9Z)-hexadecenoyl-L-serine + CoA. In terms of biological role, protein-serine O-palmitoleoyltransferase that acts as a key regulator of the Wnt signaling pathway by mediating the attachment of palmitoleate, a 16-carbon monounsaturated fatty acid (C16:1(9Z)), to Wnt proteins. Serine palmitoleoylation of WNT proteins is required for efficient binding to frizzled receptors. The protein is Protein-serine O-palmitoleoyltransferase porcupine of Mus musculus (Mouse).